The chain runs to 118 residues: Flowering-promoting factor 1-like protein 4 (118 aa).

Belongs to the FPF1 family.

The chain is Flowering-promoting factor 1-like protein 4 from Oryza sativa subsp. japonica (Rice).